We begin with the raw amino-acid sequence, 571 residues long: MATLRVSSLFASSSSSLHSNPSVFTKYQSSPKWAFSFPVTPLCSKRSKRIVHCIAGDTLGLTRPNESDAPKISIGAKDTAVVQWQGDLLAIGATENDMARDENSKFKNPLLQQLDSELNGLLSAASSEEDFSGKSGQSVNLRFPGGRITLVGLGSSASSPTSYHSLGQAAAAAAKSSQARNIAVALASTDGLSAESKINSASAIATGVVLGSFEDNRFRSESKKSTLESLDILGLGTGPEIERKIKYAEHVCAGVILGRELVNAPANIVTPAVLAEEAKKIASTYSDVISVNILDAEQCKELKMGAYLAVAAAATENPPYFIHLCFKTPTKERKTKLALVGKGLTFDSGGYNLKVGAGSRIELMKNDMGGAAAVLGAAKALGEIRPSRVEVHFIVAACENMISAEGMRPGDIVTASNGKTIEVNNTDAEGRLTLADALIYACNQGVEKIIDLATLTGAIMVALGPSVAGAFTPNDDLAREVVEAAEASGEKLWRMPMEESYWESMKSGVADMINTGPGNGGAITGALFLKQFVDEKVQWLHLDVAGPVWSDEKKNATGYGVSTLVEWVLRN.

The transit peptide at Met-1 to Cys-53 directs the protein to the chloroplast. 2 residues coordinate Mg(2+): Lys-342 and Asp-347. Lys-354 is a catalytic residue. The Mg(2+) site is built by Asp-367, Asp-427, and Glu-429. The active site involves Arg-431.

Belongs to the peptidase M17 family. Homohexamer (dimer of homotrimers). It depends on Mg(2+) as a cofactor. In terms of tissue distribution, observed during floral development. Expressed in healthy and senescent leaves, cotyledons (emergence from seed coats), pistils, sepals, petals, stamens, and floral buds (at protein level). Present at very low levels in healthy leaves.

Its subcellular location is the plastid. It is found in the chloroplast. It catalyses the reaction Release of an N-terminal amino acid, Xaa-|-Yaa-, in which Xaa is preferably Leu, but may be other amino acids including Pro although not Arg or Lys, and Yaa may be Pro. Amino acid amides and methyl esters are also readily hydrolyzed, but rates on arylamides are exceedingly low.. It carries out the reaction Release of N-terminal proline from a peptide.. Functionally, catalyzes the removal of unsubstituted N-terminal amino acids from various peptides. When associated as homohexamer, catalyzes the proteolyzes of Xaa-Leu dipeptides. Possesses leucine aminopeptidase activity against the model substrate leucine-amido methyl coumarin. Presumably involved in the processing and regular turnover of intracellular proteins. Regulates wound signaling and has a role in insect defense. Its function is as follows. Functions as a molecular chaperone to protect proteins from heat-induced damage. In Solanum lycopersicum (Tomato), this protein is Leucine aminopeptidase A1, chloroplastic.